The sequence spans 269 residues: Formamidopyrimidine-DNA glycosylase (269 aa).

P2 (schiff-base intermediate with DNA) is an active-site residue. Residue E3 is the Proton donor of the active site. K57 serves as the catalytic Proton donor; for beta-elimination activity. Residues H90, R109, and K150 each coordinate DNA. An FPG-type zinc finger spans residues 235–269 (QVYGKGGKPCPRCDNPLSEMKIGQRASVFCSECQK). R259 functions as the Proton donor; for delta-elimination activity in the catalytic mechanism.

This sequence belongs to the FPG family. As to quaternary structure, monomer. It depends on Zn(2+) as a cofactor.

It carries out the reaction Hydrolysis of DNA containing ring-opened 7-methylguanine residues, releasing 2,6-diamino-4-hydroxy-5-(N-methyl)formamidopyrimidine.. The enzyme catalyses 2'-deoxyribonucleotide-(2'-deoxyribose 5'-phosphate)-2'-deoxyribonucleotide-DNA = a 3'-end 2'-deoxyribonucleotide-(2,3-dehydro-2,3-deoxyribose 5'-phosphate)-DNA + a 5'-end 5'-phospho-2'-deoxyribonucleoside-DNA + H(+). Its function is as follows. Involved in base excision repair of DNA damaged by oxidation or by mutagenic agents. Acts as a DNA glycosylase that recognizes and removes damaged bases. Has a preference for oxidized purines, such as 7,8-dihydro-8-oxoguanine (8-oxoG). Has AP (apurinic/apyrimidinic) lyase activity and introduces nicks in the DNA strand. Cleaves the DNA backbone by beta-delta elimination to generate a single-strand break at the site of the removed base with both 3'- and 5'-phosphates. The sequence is that of Formamidopyrimidine-DNA glycosylase from Photobacterium profundum (strain SS9).